A 139-amino-acid polypeptide reads, in one-letter code: Large-conductance mechanosensitive channel (139 aa).

The next 3 membrane-spanning stretches (helical) occupy residues 19–39 (VGVI…ADII), 40–60 (MPIV…LPLS), and 81–101 (GNFL…FMVI).

It belongs to the MscL family. Homopentamer.

It is found in the cell inner membrane. Its function is as follows. Channel that opens in response to stretch forces in the membrane lipid bilayer. May participate in the regulation of osmotic pressure changes within the cell. In Nitrobacter winogradskyi (strain ATCC 25391 / DSM 10237 / CIP 104748 / NCIMB 11846 / Nb-255), this protein is Large-conductance mechanosensitive channel.